The sequence spans 68 residues: TxMMSK-03 (68 aa).

The N-terminal stretch at 1–19 is a signal peptide; that stretch reads MSKLGALLIICLLLFPLTA. A propeptide spanning residues 20-50 is cleaved from the precursor; it reads VPMDGDQPADRPAERMQDDISFEQHPMFDAT. Cystine bridges form between Cys53–Cys67, Cys54–Cys63, and Cys59–Cys66. The residue at position 65 (Pro65) is a 4-hydroxyproline; partial.

Post-translationally, contains 3 disulfide bonds. Expressed by the venom duct. Both hydroxylated and non-hydroxylated forms are mostly and only present in part 2 (proximal of the venom bulb) of the venom duct, respectively.

Its subcellular location is the secreted. This chain is TxMMSK-03, found in Conus textile (Cloth-of-gold cone).